The chain runs to 142 residues: MSADSTTKFGFVCVQNAGRSQMSTAFAERERERRDLEDSVEILTGGTHPADHVHEEVVEVMGEEGFDLSERTPREVSTDELESCDIVATMGCSTLELDAETVDVRDWALDDPDGQEMEQVREIRDDIEQRVVDLFDEFNPDD.

The protein belongs to the low molecular weight phosphotyrosine protein phosphatase family.

Functionally, reduces arsenate [As(V)] to arsenite [As(III)]. The protein is Putative arsenate reductase (arsC) of Halobacterium salinarum (strain ATCC 700922 / JCM 11081 / NRC-1) (Halobacterium halobium).